The primary structure comprises 316 residues: MIGRVDVKAWGKVVVLMGGYSAEREISLKSGTAVLQSLLRQGIEAHGIDVDKGVLTQLSKGQFTRAFIALHGRGGEDGVIQGVLETLNLPYTGSGVLGSALTMDKLRSKRLWRGMDLPTADFSVLTRDTNPALIAADLGLPLIVKPAREGSSLGMMKVESIEALQSAYREAVIFDTAVFAERWLPGAEYTAAILADRVLPLIRLETPRVFYDFEAKYHANTTRYFCPCGLSEKQEQDLQALALEAFQALGASGWGRVDLRCDEKAHPYLLEINTVPGMTDHSLVPMAAQAAGIEFDEMVLQILASSLERRMFQDGT.

In terms of domain architecture, ATP-grasp spans 109–304 (KRLWRGMDLP…FDEMVLQILA (196 aa)). 135–190 (AADLGLPLIVKPAREGSSLGMMKVESIEALQSAYREAVIFDTAVFAERWLPGAEYT) provides a ligand contact to ATP. Residues aspartate 258, glutamate 271, and asparagine 273 each coordinate Mg(2+).

This sequence belongs to the D-alanine--D-alanine ligase family. Mg(2+) is required as a cofactor. It depends on Mn(2+) as a cofactor.

It is found in the cytoplasm. The catalysed reaction is 2 D-alanine + ATP = D-alanyl-D-alanine + ADP + phosphate + H(+). The protein operates within cell wall biogenesis; peptidoglycan biosynthesis. In terms of biological role, cell wall formation. This chain is D-alanine--D-alanine ligase, found in Nitrosococcus oceani (strain ATCC 19707 / BCRC 17464 / JCM 30415 / NCIMB 11848 / C-107).